The following is a 356-amino-acid chain: Glutamine synthetase cytosolic isozyme 1-1 (356 aa).

S2 bears the N-acetylserine mark. Phosphoserine occurs at positions 2 and 48. The GS beta-grasp domain occupies 19–99 (IIAEYIWVGG…VMCDAYTPAG (81 aa)). The interval 36–62 (KARTLPGPVTDPSQLPKWNYDGSSTGQ) is disordered. Residues 106–356 (KRHAAAKVFS…IAETTILWNP (251 aa)) enclose the GS catalytic domain.

It belongs to the glutamine synthetase family. Homooctamer. Interacts with CRK3 and GRF3. Phosphorylated by CRK3. In terms of tissue distribution, expressed in root tips, root hairs and epidermis. Ubiquitously expressed with higher levels in siliques and roots.

The protein resides in the cytoplasm. It catalyses the reaction L-glutamate + NH4(+) + ATP = L-glutamine + ADP + phosphate + H(+). Functionally, high-affinity glutamine synthetase which catalyzes the synthesis of glutamine from ammonium and glutamate. May contribute to the homeostatic control of glutamine synthesis in roots. The sequence is that of Glutamine synthetase cytosolic isozyme 1-1 (GLN1-1) from Arabidopsis thaliana (Mouse-ear cress).